A 405-amino-acid chain; its full sequence is MTVDRQALGFGYGEHAAYASNPWASRGRLYPEASSPTRSDFQRDRDRIVHTTAFRRLKHKTQVFIAADGDHYRTRLTHTIEVAQIARALARALKLDEDLAEGVALVHDFGHTPFGHTGEDALHEVLEPYGGFDHNAQSLRIVTKLERRYAEFDGLNLTWESLEGLVKHNGPLMTADGQGLRGPVPQPILDYCALHDLELASFASLEAQVAAIADDIAYNTHDIDDGLRAGYLTFEMLEEIPFLARLMREVHDRYPGLESSRFTHEIMRRQITAMVEDVIAVAQKRLGEVRPESAKDVRCAGRVMATFSDEMSETDRQIKNLLMTRIYRHPEVMRVRQGAASIVTDLYRAFMDDPSLMKEHYWIDQIAGMAEPARARHVGDYLAGMTDTFAISVHRRLFDHTPDLR.

The 145-residue stretch at 75–219 folds into the HD domain; it reads RLTHTIEVAQ…AAIADDIAYN (145 aa).

The protein belongs to the dGTPase family. Type 2 subfamily.

In Rhizobium meliloti (strain 1021) (Ensifer meliloti), this protein is Deoxyguanosinetriphosphate triphosphohydrolase-like protein.